Consider the following 346-residue polypeptide: Histidinol-phosphate aminotransferase (346 aa).

K206 bears the N6-(pyridoxal phosphate)lysine mark.

This sequence belongs to the class-II pyridoxal-phosphate-dependent aminotransferase family. Histidinol-phosphate aminotransferase subfamily. In terms of assembly, homodimer. Pyridoxal 5'-phosphate is required as a cofactor.

The catalysed reaction is L-histidinol phosphate + 2-oxoglutarate = 3-(imidazol-4-yl)-2-oxopropyl phosphate + L-glutamate. Its pathway is amino-acid biosynthesis; L-histidine biosynthesis; L-histidine from 5-phospho-alpha-D-ribose 1-diphosphate: step 7/9. This is Histidinol-phosphate aminotransferase from Bacteroides thetaiotaomicron (strain ATCC 29148 / DSM 2079 / JCM 5827 / CCUG 10774 / NCTC 10582 / VPI-5482 / E50).